The sequence spans 498 residues: L-amino acid oxidase Bs29 (498 aa).

A signal peptide spans Ser-1–Ala-3. A disulfide bridge links Cys-12 with Cys-175. FAD contacts are provided by residues Met-45 to Ser-46, Glu-65 to Ala-66, Arg-73, and Gly-89 to Arg-92. Arg-92 provides a ligand contact to substrate. An N-linked (GlcNAc...) asparagine glycan is attached at Asn-174. A substrate-binding site is contributed by His-225. Position 263 (Val-263) interacts with FAD. A disulfide bridge links Cys-333 with Cys-414. Substrate is bound at residue Tyr-374. FAD is bound by residues Glu-459 and Gly-466–Thr-471. Gly-466–Trp-467 contributes to the substrate binding site.

The protein belongs to the flavin monoamine oxidase family. FIG1 subfamily. As to quaternary structure, monomer. This is in contrast with most of its orthologs, that are non-covalently linked homodimers. The cofactor is FAD. As to expression, expressed by the venom gland.

Its subcellular location is the secreted. It catalyses the reaction an L-alpha-amino acid + O2 + H2O = a 2-oxocarboxylate + H2O2 + NH4(+). The enzyme catalyses L-leucine + O2 + H2O = 4-methyl-2-oxopentanoate + H2O2 + NH4(+). In terms of biological role, catalyzes an oxidative deamination of predominantly hydrophobic and aromatic L-amino acids, thus producing hydrogen peroxide that may contribute to the diverse toxic effects of this enzyme. Shows activity on L-Leu. Damage cell membranes of the Gram-positive bacteria S.aureus (MIC=4 ug/ml and MBC=8 ug/ml) and the Gram-negative bacteria A.baumanni (MIC=2 ug/ml and MBC=4 ug/ml). This antibacterial activity is dependent on the production of hydrogen peroxyde, since it is inhibited by catalase, a hydrogen peroxyde scavenger. The polypeptide is L-amino acid oxidase Bs29 (Bothriechis schlegelii (Eyelash palm pitviper)).